The sequence spans 379 residues: Inositol 3-kinase (379 aa).

ATP-binding positions include Ser-217, 267–270 (GAGD), and Asn-294. The active-site Proton acceptor is Asp-270.

The protein belongs to the carbohydrate kinase pfkB family.

The enzyme catalyses myo-inositol + ATP = 1D-myo-inositol 3-phosphate + ADP + H(+). Kinase that phosphorylates myo-inositol to produce multiple myo-inositol monophosphates, Ins(1)P, Ins(3)P, Ins(4)P, Ins(5)P and Ins(6)P. Participates in phytic acid biosynthesis in developing seeds. Phytic acid is the primary storage form of phosphorus in cereal grains and other plant seeds. This Zea mays (Maize) protein is Inositol 3-kinase.